The chain runs to 181 residues: UPF0398 protein LMOf2365_1918 (181 aa).

It belongs to the UPF0398 family.

The chain is UPF0398 protein LMOf2365_1918 from Listeria monocytogenes serotype 4b (strain F2365).